Here is a 101-residue protein sequence, read N- to C-terminus: NAD(P)H-quinone oxidoreductase subunit 4L, chloroplastic (101 aa).

3 consecutive transmembrane segments (helical) span residues 2-22 (MFERVLFLSVYLFSIGIYGLI), 32-52 (ICLELILNSINLNLVTFSDLF), and 61-81 (IFAIFVIALAAAEAAIGLSIL).

The protein belongs to the complex I subunit 4L family. NDH is composed of at least 16 different subunits, 5 of which are encoded in the nucleus.

It is found in the plastid. It localises to the chloroplast thylakoid membrane. The enzyme catalyses a plastoquinone + NADH + (n+1) H(+)(in) = a plastoquinol + NAD(+) + n H(+)(out). It carries out the reaction a plastoquinone + NADPH + (n+1) H(+)(in) = a plastoquinol + NADP(+) + n H(+)(out). Its function is as follows. NDH shuttles electrons from NAD(P)H:plastoquinone, via FMN and iron-sulfur (Fe-S) centers, to quinones in the photosynthetic chain and possibly in a chloroplast respiratory chain. The immediate electron acceptor for the enzyme in this species is believed to be plastoquinone. Couples the redox reaction to proton translocation, and thus conserves the redox energy in a proton gradient. In Zea mays (Maize), this protein is NAD(P)H-quinone oxidoreductase subunit 4L, chloroplastic.